A 215-amino-acid chain; its full sequence is ATP-dependent dethiobiotin synthetase BioD (215 aa).

An ATP-binding site is contributed by Asp13–Val18. Thr17 is a binding site for Mg(2+). The active site involves Lys38. Substrate is bound at residue Thr42. ATP-binding positions include Asp50, Glu115 to Gly118, and Asn175 to His176. Positions 50 and 115 each coordinate Mg(2+).

It belongs to the dethiobiotin synthetase family. Homodimer. Mg(2+) serves as cofactor.

It is found in the cytoplasm. It carries out the reaction (7R,8S)-7,8-diammoniononanoate + CO2 + ATP = (4R,5S)-dethiobiotin + ADP + phosphate + 3 H(+). Its pathway is cofactor biosynthesis; biotin biosynthesis; biotin from 7,8-diaminononanoate: step 1/2. Catalyzes a mechanistically unusual reaction, the ATP-dependent insertion of CO2 between the N7 and N8 nitrogen atoms of 7,8-diaminopelargonic acid (DAPA, also called 7,8-diammoniononanoate) to form a ureido ring. This is ATP-dependent dethiobiotin synthetase BioD from Neisseria meningitidis serogroup C / serotype 2a (strain ATCC 700532 / DSM 15464 / FAM18).